The chain runs to 249 residues: Diaminopimelate epimerase (249 aa).

Substrate contacts are provided by N11 and N60. The active-site Proton donor is the C69. Substrate is bound by residues 70–71 (GN), N164, and 182–183 (ER). The active-site Proton acceptor is the C192. 193–194 (GT) is a binding site for substrate.

This sequence belongs to the diaminopimelate epimerase family. In terms of assembly, homodimer.

The protein localises to the cytoplasm. The catalysed reaction is (2S,6S)-2,6-diaminopimelate = meso-2,6-diaminopimelate. The protein operates within amino-acid biosynthesis; L-lysine biosynthesis via DAP pathway; DL-2,6-diaminopimelate from LL-2,6-diaminopimelate: step 1/1. Its function is as follows. Catalyzes the stereoinversion of LL-2,6-diaminopimelate (L,L-DAP) to meso-diaminopimelate (meso-DAP), a precursor of L-lysine and an essential component of the bacterial peptidoglycan. This chain is Diaminopimelate epimerase, found in Campylobacter jejuni subsp. jejuni serotype O:23/36 (strain 81-176).